The chain runs to 85 residues: CRISPR-associated endoribonuclease Cas2 2 (85 aa).

Residue Asp-8 coordinates Mg(2+).

Belongs to the CRISPR-associated endoribonuclease Cas2 protein family. Homodimer, forms a heterotetramer with a Cas1 homodimer. Mg(2+) is required as a cofactor.

CRISPR (clustered regularly interspaced short palindromic repeat), is an adaptive immune system that provides protection against mobile genetic elements (viruses, transposable elements and conjugative plasmids). CRISPR clusters contain sequences complementary to antecedent mobile elements and target invading nucleic acids. CRISPR clusters are transcribed and processed into CRISPR RNA (crRNA). Functions as a ssRNA-specific endoribonuclease. Involved in the integration of spacer DNA into the CRISPR cassette. This chain is CRISPR-associated endoribonuclease Cas2 2, found in Chloroflexus aurantiacus (strain ATCC 29366 / DSM 635 / J-10-fl).